The primary structure comprises 222 residues: Adenylate kinase (222 aa).

Position 16 to 21 (16 to 21 (GAGKGT)) interacts with ATP. Positions 36–65 (ATGDMLRSQISKGTELGLQAKKIMDQGGLV) are NMP. Residues Thr37, Arg42, 63 to 65 (GLV), 92 to 95 (GFPR), and Gln99 each bind AMP. The tract at residues 133–170 (GRLIHPASGRSYHKLFNPPKEDMKDDVTGEPLVQRSDD) is LID. ATP-binding positions include Arg134 and 143–144 (SY). The AMP site is built by Arg167 and Arg178. Gln206 provides a ligand contact to ATP.

The protein belongs to the adenylate kinase family. AK2 subfamily. Monomer.

It localises to the cytoplasm. The protein localises to the cytosol. The protein resides in the mitochondrion intermembrane space. The catalysed reaction is AMP + ATP = 2 ADP. Functionally, catalyzes the reversible transfer of the terminal phosphate group between ATP and AMP. Plays an important role in cellular energy homeostasis and in adenine nucleotide metabolism. Adenylate kinase activity is critical for regulation of the phosphate utilization and the AMP de novo biosynthesis pathways. The chain is Adenylate kinase from Candida glabrata (strain ATCC 2001 / BCRC 20586 / JCM 3761 / NBRC 0622 / NRRL Y-65 / CBS 138) (Yeast).